We begin with the raw amino-acid sequence, 486 residues long: UDP-N-acetylmuramate--L-alanine ligase (486 aa).

ATP is bound at residue 126-132; the sequence is GTHGKTS.

It belongs to the MurCDEF family.

The protein resides in the cytoplasm. It catalyses the reaction UDP-N-acetyl-alpha-D-muramate + L-alanine + ATP = UDP-N-acetyl-alpha-D-muramoyl-L-alanine + ADP + phosphate + H(+). It functions in the pathway cell wall biogenesis; peptidoglycan biosynthesis. Cell wall formation. The chain is UDP-N-acetylmuramate--L-alanine ligase from Buchnera aphidicola subsp. Baizongia pistaciae (strain Bp).